We begin with the raw amino-acid sequence, 354 residues long: Protein Wnt-11 (354 aa).

Positions 1–24 (MRARPQVCEALLFALALHTGVCYG) are cleaved as a signal peptide. Residues Asn40 and Asn90 are each glycosylated (N-linked (GlcNAc...) asparagine). 3 disulfide bridges follow: Cys80–Cys91, Cys130–Cys138, and Cys140–Cys157. N-linked (GlcNAc...) asparagine glycosylation is present at Asn160. Disulfide bonds link Cys209-Cys223, Cys211-Cys218, Cys283-Cys314, Cys299-Cys309, Cys313-Cys353, Cys329-Cys344, Cys331-Cys341, and Cys336-Cys337. Ser215 is lipidated: O-palmitoleoyl serine; by PORCN. N-linked (GlcNAc...) asparagine glycans are attached at residues Asn300 and Asn304.

It belongs to the Wnt family. Post-translationally, palmitoleoylation is required for efficient binding to frizzled receptors. Depalmitoleoylation leads to Wnt signaling pathway inhibition.

The protein localises to the secreted. Its subcellular location is the extracellular space. The protein resides in the extracellular matrix. In terms of biological role, ligand for members of the frizzled family of seven transmembrane receptors. Probable developmental protein. May be a signaling molecule which affects the development of discrete regions of tissues. Is likely to signal over only few cell diameters. In Mus musculus (Mouse), this protein is Protein Wnt-11 (Wnt11).